Here is a 462-residue protein sequence, read N- to C-terminus: S-alkyl-thiohydroximate lyase SUR1 (462 aa).

Belongs to the class-I pyridoxal-phosphate-dependent aminotransferase family. It depends on pyridoxal 5'-phosphate as a cofactor.

Functionally, C-S lyase involved in glucosinolate biosynthesis. Converts S-(alkylacetohydroximoyl)-L-cysteine to thiohydroximate. Functions in auxin homeostasis. Probably required for glucosinolate activation in response to pathogens. The protein is S-alkyl-thiohydroximate lyase SUR1 (SUR1) of Arabidopsis thaliana (Mouse-ear cress).